Here is a 192-residue protein sequence, read N- to C-terminus: Small ribosomal subunit protein uS4B (192 aa).

One can recognise an S4 RNA-binding domain in the interval 83-145 (RRLDNLVYRL…SRKIQTYASN (63 aa)).

This sequence belongs to the universal ribosomal protein uS4 family. Part of the 30S ribosomal subunit. Contacts protein S5. The interaction surface between S4 and S5 is involved in control of translational fidelity.

One of the primary rRNA binding proteins, it binds directly to 16S rRNA where it nucleates assembly of the body of the 30S subunit. Its function is as follows. With S5 and S12 plays an important role in translational accuracy. The polypeptide is Small ribosomal subunit protein uS4B (rpsD2) (Clostridium acetobutylicum (strain ATCC 824 / DSM 792 / JCM 1419 / IAM 19013 / LMG 5710 / NBRC 13948 / NRRL B-527 / VKM B-1787 / 2291 / W)).